The chain runs to 536 residues: ADP,ATP carrier protein 4 (536 aa).

The next 9 membrane-spanning stretches (helical) occupy residues 44-64, 77-97, 109-129, 172-194, 205-225, 244-264, 309-329, 349-369, and 378-398; these read VLLF…LYVL, SILF…IVIV, MLEV…FVIW, TMLY…FSRA, KFLP…GLLT, FSQV…TSFF, VVAA…GIVL, AQII…THLI, and AITA…MVFF. N-linked (GlcNAc...) asparagine glycosylation is found at asparagine 400 and asparagine 421. A run of 2 helical transmembrane segments spans residues 465–485 and 493–513; these read LGIN…TVVF and VVSV…RSIL.

This sequence belongs to the ADP/ATP translocase tlc family.

Its subcellular location is the cell membrane. In terms of biological role, ATP transporter involved in the uptake of ATP from the host cell cytoplasm. Provides the microsporidian cell with host ATP in exchange for ADP. This is an obligate exchange system. This energy acquiring activity is an important component of microsporidian parasitism. This is ADP,ATP carrier protein 4 (NTT4) from Encephalitozoon cuniculi (strain GB-M1) (Microsporidian parasite).